We begin with the raw amino-acid sequence, 390 residues long: GTPase Obg (390 aa).

The Obg domain occupies 1 to 159 (MKFVDEATIL…RELMLELLLL (159 aa)). Residues 160–333 (ADVGMLGLPN…LCWDVMNFLN (174 aa)) enclose the OBG-type G domain. GTP is bound by residues 166–173 (GLPNAGKS), 191–195 (FTTLI), 213–216 (DIPG), 283–286 (NKID), and 314–316 (SAA). Mg(2+) contacts are provided by Ser173 and Thr193. A compositionally biased stretch (acidic residues) spans 363-384 (EVEAEAESEDDDDWDEEDDDGV). Residues 363-390 (EVEAEAESEDDDDWDEEDDDGVEFIYER) are disordered.

This sequence belongs to the TRAFAC class OBG-HflX-like GTPase superfamily. OBG GTPase family. Monomer. Mg(2+) is required as a cofactor.

Its subcellular location is the cytoplasm. In terms of biological role, an essential GTPase which binds GTP, GDP and possibly (p)ppGpp with moderate affinity, with high nucleotide exchange rates and a fairly low GTP hydrolysis rate. Plays a role in control of the cell cycle, stress response, ribosome biogenesis and in those bacteria that undergo differentiation, in morphogenesis control. The protein is GTPase Obg of Yersinia enterocolitica serotype O:8 / biotype 1B (strain NCTC 13174 / 8081).